The sequence spans 242 residues: NAD(P)H-quinone oxidoreductase subunit K (242 aa).

[4Fe-4S] cluster is bound by residues Cys-60, Cys-61, Cys-125, and Cys-156.

The protein belongs to the complex I 20 kDa subunit family. In terms of assembly, NDH-1 can be composed of about 15 different subunits; different subcomplexes with different compositions have been identified which probably have different functions. Requires [4Fe-4S] cluster as cofactor.

The protein localises to the cellular thylakoid membrane. The catalysed reaction is a plastoquinone + NADH + (n+1) H(+)(in) = a plastoquinol + NAD(+) + n H(+)(out). It carries out the reaction a plastoquinone + NADPH + (n+1) H(+)(in) = a plastoquinol + NADP(+) + n H(+)(out). In terms of biological role, NDH-1 shuttles electrons from an unknown electron donor, via FMN and iron-sulfur (Fe-S) centers, to quinones in the respiratory and/or the photosynthetic chain. The immediate electron acceptor for the enzyme in this species is believed to be plastoquinone. Couples the redox reaction to proton translocation, and thus conserves the redox energy in a proton gradient. Cyanobacterial NDH-1 also plays a role in inorganic carbon-concentration. The polypeptide is NAD(P)H-quinone oxidoreductase subunit K (Prochlorococcus marinus (strain SARG / CCMP1375 / SS120)).